The primary structure comprises 101 residues: MSVSSAVDQYTVLTGDRSKIKDLLCSRLTECGWRDEVRLMCRNILNEKGTNNSFTVEQLIAEVTPKARTLVPDAVKKELLMKIRNILTEIEEEADEPEDES.

Belongs to the ENY2 family. As to quaternary structure, component of the nuclear pore complex (NPC)-associated AMEX complex (anchoring and mRNA export complex), composed of at least e(y)2 and xmas-2. Component of the SAGA transcription coactivator-HAT complexes, at least composed of Ada2b, e(y)2, Pcaf/Gcn5, Taf10 and Nipped-A/Trrap. Within the SAGA complex, e(y)2, Sgf11, and not/nonstop form an additional subcomplex of SAGA called the DUB module (deubiquitination module). Component of the THO complex, composed of at least e(y)2, HPR1, THO2, THOC5, THOC6 and THOC7. Interacts with e(y)1. Interacts with su(Hw) (via zinc fingers). Interacts with xmas-2; required for localization to the nuclear periphery. Interacts with the nuclear pore complex (NPC).

Its subcellular location is the nucleus. The protein localises to the nucleoplasm. It is found in the cytoplasm. In terms of biological role, involved in mRNA export coupled transcription activation by association with both the AMEX and the SAGA complexes. The SAGA complex is a multiprotein complex that activates transcription by remodeling chromatin and mediating histone acetylation and deubiquitination. Within the SAGA complex, participates in a subcomplex that specifically deubiquitinates histone H2B. The SAGA complex is recruited to specific gene promoters by activators, where it is required for transcription. Required for nuclear receptor-mediated transactivation. Involved in transcription elongation by recruiting the THO complex onto nascent mRNA. The AMEX complex functions in docking export-competent ribonucleoprotein particles (mRNPs) to the nuclear entrance of the nuclear pore complex (nuclear basket). AMEX participates in mRNA export and accurate chromatin positioning in the nucleus by tethering genes to the nuclear periphery. The sequence is that of Enhancer of yellow 2 transcription factor from Drosophila simulans (Fruit fly).